The chain runs to 62 residues: Temporin-CDYb (62 aa).

Residues 1-22 (MFTLKKSLLLLFFLGTINLSLC) form the signal peptide. A propeptide spanning residues 23-45 (EEERDADEEERRDDPEERAVQVE) is cleaved from the precursor. Leu-60 is subject to Leucine amide.

It belongs to the frog skin active peptide (FSAP) family. Temporin subfamily. In terms of tissue distribution, expressed by the skin glands.

The protein resides in the secreted. In terms of biological role, antimicrobial peptide. Has low activity against the Gram-positive bacterium S.aureus (MIC&gt;100 uM) and the Gram-negative bacterium E.coli (MIC&gt;100 uM). Has weak hemolytic activity against human erythrocytes. The chain is Temporin-CDYb from Rana dybowskii (Dybovsky's frog).